The chain runs to 754 residues: MAAGVLPQNEQPYSTLVNNSECVANMKGNLERPTPKYTKVGERLRHVIPGHMACSMACGGRACKYENPARWSEQEQAIKGVYSSWVTDNILAMARPSSELLEKYHIIDQFLSHGIKTIINLQRPGEHASCGNPLEQESGFTYLPEAFMEAGIYFYNFGWKDYGVASLTTILDMVKVMTFALQEGKVAIHCHAGLGRTGVLIACYLVFATRMTADQAIIFVRAKRPNSIQTRGQLLCVREFTQFLTPLRNIFSCCDPKAHAVTLPQYLIRQRHLLHGYEARLLKHVPKIIHLVCKLLLDLAENRPVMMKDVSEGPGLSAEIEKTMSEMVTMQLDKELLRHDSDVSNPPNPTAVAADFDNRGMIFSNEQQFDPLWKRRNVECLQPLTHLKRRLSYSDSDLKRAENLLEQGETPQTVPAQILVGHKPRQQKLISHCYIPQSPEPDLHKEALVRSTLSFWSQSKFGGLEGLKDNGSPIFHGRIIPKEAQQSGAFSADVSGSHSPGEPVSPSFANVHKDPNPAHQQVSHCQCKTHGVGSPGSVRQNSRTPRSPLDCGSSPKAQFLVEHETQDSKDLSEAASHSALQSELSAEARRILAAKALANLNESVEKEELKRKVEMWQKELNSRDGAWERICGERDPFILCSLMWSWVEQLKEPVITKEDVDMLVDRRADAAEALFLLEKGQHQTILCVLHCIVNLQTIPVDVEEAFLAHAIKAFTKVNFDSENGPTVYNTLKKIFKHTLEEKRKMTKDGPKPGL.

A Tyrosine-protein phosphatase domain is found at 82 to 253; sequence YSSWVTDNIL…LTPLRNIFSC (172 aa). Residue Cys190 is the Phosphocysteine intermediate of the active site. Phosphoserine occurs at positions 392 and 394. The segment covering 487 to 498 has biased composition (polar residues); it reads SGAFSADVSGSH. Residues 487–554 form a disordered region; sequence SGAFSADVSG…PRSPLDCGSS (68 aa). Position 547 is a phosphoserine (Ser547).

Belongs to the protein-tyrosine phosphatase family. Non-receptor class PTPDC1 subfamily.

In terms of biological role, may play roles in cilia formation and/or maintenance. The chain is Protein tyrosine phosphatase domain-containing protein 1 (PTPDC1) from Homo sapiens (Human).